Here is a 677-residue protein sequence, read N- to C-terminus: Transketolase 1 (677 aa).

Histidine 27 provides a ligand contact to substrate. Thiamine diphosphate is bound by residues histidine 66 and 114–116; that span reads GPL. Residue aspartate 155 participates in Mg(2+) binding. Residues glycine 156 and asparagine 185 each contribute to the thiamine diphosphate site. Residues asparagine 185 and isoleucine 187 each contribute to the Mg(2+) site. Substrate-binding residues include histidine 261, arginine 356, and serine 383. Histidine 261 provides a ligand contact to thiamine diphosphate. Residues glutamate 415 and phenylalanine 442 each coordinate thiamine diphosphate. Residue glutamate 415 is the Proton donor of the active site. Substrate is bound by residues histidine 466, aspartate 474, and arginine 525.

It belongs to the transketolase family. As to quaternary structure, homodimer. Requires Mg(2+) as cofactor. The cofactor is Ca(2+). Mn(2+) is required as a cofactor. Co(2+) serves as cofactor. It depends on thiamine diphosphate as a cofactor.

It carries out the reaction D-sedoheptulose 7-phosphate + D-glyceraldehyde 3-phosphate = aldehydo-D-ribose 5-phosphate + D-xylulose 5-phosphate. In terms of biological role, catalyzes the transfer of a two-carbon ketol group from a ketose donor to an aldose acceptor, via a covalent intermediate with the cofactor thiamine pyrophosphate. The sequence is that of Transketolase 1 (TKT1) from Candida albicans (Yeast).